The sequence spans 66 residues: MWKVNDQGFLNITVTGTKFNLIAITGKLGFYTDPPSHLMIMPLKIFPVHKFSKNEPNKKQKRFIYF.

N-linked (GlcNAc...) asparagine; by host glycosylation occurs at N11.

This sequence belongs to the asfivirus I177L family.

Its subcellular location is the virion. This chain is Protein I177L, found in African swine fever virus (strain Badajoz 1971 Vero-adapted) (Ba71V).